The primary structure comprises 156 residues: uncharacterized protein (156 aa).

The region spanning Val10–Val156 is the N-acetyltransferase domain.

The protein belongs to the acetyltransferase family.

This is an uncharacterized protein from Mycobacterium bovis (strain ATCC BAA-935 / AF2122/97).